The primary structure comprises 475 residues: Bystin (475 aa).

2 stretches are compositionally biased toward basic residues: residues 1 to 12 (MGKDVKKVHKLR) and 29 to 41 (KPHK…RKKK). Disordered regions lie at residues 1-57 (MGKD…ESVI) and 106-149 (DFID…QFGV). Composition is skewed to acidic residues over residues 45–54 (ENDTGIDETE) and 107–119 (FIDD…DADQ).

It belongs to the bystin family.

The protein resides in the nucleus. Its subcellular location is the nucleolus. Required for processing of 20S pre-rRNA precursor and biogenesis of 40S ribosomal subunits. In Dictyostelium discoideum (Social amoeba), this protein is Bystin (bysl).